The sequence spans 568 residues: Adenine deaminase (568 aa).

This sequence belongs to the metallo-dependent hydrolases superfamily. Adenine deaminase family. It depends on Mn(2+) as a cofactor.

The catalysed reaction is adenine + H2O + H(+) = hypoxanthine + NH4(+). In Clostridium perfringens (strain ATCC 13124 / DSM 756 / JCM 1290 / NCIMB 6125 / NCTC 8237 / Type A), this protein is Adenine deaminase.